The sequence spans 432 residues: Polyadenylate-binding protein RBP47C (432 aa).

Residues Met1 to Pro55 form a disordered region. A compositionally biased stretch (pro residues) spans Gln22–Gln32. 2 RRM domains span residues Lys101–Phe183 and Leu197–Pro276. The disordered stretch occupies residues Ile271–Thr293. Residues Arg277–Gly286 show a composition bias toward polar residues. In terms of domain architecture, RRM 3 spans Thr304–Asn376.

The protein belongs to the polyadenylate-binding RBP47 family. Interacts with the poly(A) tail of mRNA in nucleus. As to expression, expressed in leaves, stems, flowers, and seedlings.

It localises to the nucleus. The protein resides in the cytoplasmic granule. Heterogeneous nuclear ribonucleoprotein (hnRNP)-protein binding the poly(A) tail of mRNA and probably involved in some steps of pre-mRNA maturation. The polypeptide is Polyadenylate-binding protein RBP47C (RBP47C) (Arabidopsis thaliana (Mouse-ear cress)).